The chain runs to 287 residues: ATP synthase gamma chain (287 aa).

It belongs to the ATPase gamma chain family. In terms of assembly, F-type ATPases have 2 components, CF(1) - the catalytic core - and CF(0) - the membrane proton channel. CF(1) has five subunits: alpha(3), beta(3), gamma(1), delta(1), epsilon(1). CF(0) has three main subunits: a, b and c.

The protein resides in the cell inner membrane. Its function is as follows. Produces ATP from ADP in the presence of a proton gradient across the membrane. The gamma chain is believed to be important in regulating ATPase activity and the flow of protons through the CF(0) complex. This Stenotrophomonas maltophilia (strain K279a) protein is ATP synthase gamma chain.